The sequence spans 394 residues: NAD(P)H-quinone oxidoreductase subunit H (394 aa).

Belongs to the complex I 49 kDa subunit family. NDH-1 can be composed of about 15 different subunits; different subcomplexes with different compositions have been identified which probably have different functions.

Its subcellular location is the cellular thylakoid membrane. The catalysed reaction is a plastoquinone + NADH + (n+1) H(+)(in) = a plastoquinol + NAD(+) + n H(+)(out). It catalyses the reaction a plastoquinone + NADPH + (n+1) H(+)(in) = a plastoquinol + NADP(+) + n H(+)(out). NDH-1 shuttles electrons from an unknown electron donor, via FMN and iron-sulfur (Fe-S) centers, to quinones in the respiratory and/or the photosynthetic chain. The immediate electron acceptor for the enzyme in this species is believed to be plastoquinone. Couples the redox reaction to proton translocation, and thus conserves the redox energy in a proton gradient. Cyanobacterial NDH-1 also plays a role in inorganic carbon-concentration. The polypeptide is NAD(P)H-quinone oxidoreductase subunit H (Synechococcus sp. (strain WH7803)).